Reading from the N-terminus, the 510-residue chain is 2,3-bisphosphoglycerate-independent phosphoglycerate mutase (510 aa).

Residues aspartate 14 and serine 64 each contribute to the Mn(2+) site. Serine 64 functions as the Phosphoserine intermediate in the catalytic mechanism. Substrate-binding positions include histidine 125, 155–156 (RD), arginine 187, arginine 193, 259–262 (RADR), and lysine 332. Residues aspartate 399, histidine 403, aspartate 440, histidine 441, and histidine 459 each coordinate Mn(2+).

The protein belongs to the BPG-independent phosphoglycerate mutase family. Monomer. Mn(2+) is required as a cofactor.

The enzyme catalyses (2R)-2-phosphoglycerate = (2R)-3-phosphoglycerate. The protein operates within carbohydrate degradation; glycolysis; pyruvate from D-glyceraldehyde 3-phosphate: step 3/5. Its function is as follows. Catalyzes the interconversion of 2-phosphoglycerate and 3-phosphoglycerate. The chain is 2,3-bisphosphoglycerate-independent phosphoglycerate mutase from Pseudomonas savastanoi pv. phaseolicola (strain 1448A / Race 6) (Pseudomonas syringae pv. phaseolicola (strain 1448A / Race 6)).